We begin with the raw amino-acid sequence, 230 residues long: Prolactin-6A1 (230 aa).

The first 29 residues, 1-29 (MLSLSQPCFSGTLLMLLASNFLLWKNVAP), serve as a signal peptide directing secretion. Asparagine 57 carries an N-linked (GlcNAc...) asparagine glycan. 2 disulfides stabilise this stretch: cysteine 89-cysteine 205 and cysteine 222-cysteine 230.

Belongs to the somatotropin/prolactin family. In terms of tissue distribution, expressed in both placenta and decidual tissues. Detected first in deciduals cells early in gestation and in trophoblasts later in pregnancy.

It localises to the secreted. This chain is Prolactin-6A1 (Prl6a1), found in Mus musculus (Mouse).